The following is a 274-amino-acid chain: Large ribosomal subunit protein uL2 (274 aa).

2 disordered regions span residues 28-54 (APYA…TRHI) and 223-265 (VAMN…KRTD). Residues 39 to 48 (KSGGRNNNGR) are compositionally biased toward low complexity.

Belongs to the universal ribosomal protein uL2 family. As to quaternary structure, part of the 50S ribosomal subunit. Forms a bridge to the 30S subunit in the 70S ribosome.

Its function is as follows. One of the primary rRNA binding proteins. Required for association of the 30S and 50S subunits to form the 70S ribosome, for tRNA binding and peptide bond formation. It has been suggested to have peptidyltransferase activity; this is somewhat controversial. Makes several contacts with the 16S rRNA in the 70S ribosome. The chain is Large ribosomal subunit protein uL2 from Alteromonas mediterranea (strain DSM 17117 / CIP 110805 / LMG 28347 / Deep ecotype).